Here is a 206-residue protein sequence, read N- to C-terminus: Small ribosomal subunit protein uS4 (206 aa).

The 61-residue stretch at 96-156 (CRLDNVVYRM…EKSLGQLRIV (61 aa)) folds into the S4 RNA-binding domain.

This sequence belongs to the universal ribosomal protein uS4 family. As to quaternary structure, part of the 30S ribosomal subunit. Contacts protein S5. The interaction surface between S4 and S5 is involved in control of translational fidelity.

One of the primary rRNA binding proteins, it binds directly to 16S rRNA where it nucleates assembly of the body of the 30S subunit. Functionally, with S5 and S12 plays an important role in translational accuracy. The protein is Small ribosomal subunit protein uS4 of Pseudomonas putida (strain ATCC 47054 / DSM 6125 / CFBP 8728 / NCIMB 11950 / KT2440).